Here is a 122-residue protein sequence, read N- to C-terminus: Large ribosomal subunit protein uL14 (122 aa).

This sequence belongs to the universal ribosomal protein uL14 family. Part of the 50S ribosomal subunit. Forms a cluster with proteins L3 and L19. In the 70S ribosome, L14 and L19 interact and together make contacts with the 16S rRNA in bridges B5 and B8.

Its function is as follows. Binds to 23S rRNA. Forms part of two intersubunit bridges in the 70S ribosome. This chain is Large ribosomal subunit protein uL14, found in Agathobacter rectalis (strain ATCC 33656 / DSM 3377 / JCM 17463 / KCTC 5835 / VPI 0990) (Eubacterium rectale).